The sequence spans 98 residues: NADH-ubiquinone oxidoreductase chain 4L (98 aa).

The next 3 membrane-spanning stretches (helical) occupy residues 1–21, 28–48, and 59–79; these read MTSI…GVLI, STLL…ALLI, and APLI…ALLV.

The protein belongs to the complex I subunit 4L family. As to quaternary structure, core subunit of respiratory chain NADH dehydrogenase (Complex I) which is composed of 45 different subunits.

The protein localises to the mitochondrion inner membrane. It carries out the reaction a ubiquinone + NADH + 5 H(+)(in) = a ubiquinol + NAD(+) + 4 H(+)(out). In terms of biological role, core subunit of the mitochondrial membrane respiratory chain NADH dehydrogenase (Complex I) which catalyzes electron transfer from NADH through the respiratory chain, using ubiquinone as an electron acceptor. Part of the enzyme membrane arm which is embedded in the lipid bilayer and involved in proton translocation. The protein is NADH-ubiquinone oxidoreductase chain 4L (MT-ND4L) of Vombatus ursinus (Common wombat).